The primary structure comprises 505 residues: Flagellin (505 aa).

This sequence belongs to the bacterial flagellin family.

It localises to the secreted. Its subcellular location is the bacterial flagellum. Its function is as follows. Flagellin is the subunit protein which polymerizes to form the filaments of bacterial flagella. In Salmonella muenchen, this protein is Flagellin (fliC).